We begin with the raw amino-acid sequence, 141 residues long: Hemoglobin subunit alpha (141 aa).

Residues 1 to 141 (VLSPADKTNV…VSTVLTSKYR (141 aa)) enclose the Globin domain. S3 is subject to Phosphoserine. Residue K7 is modified to N6-succinyllysine. Residue T8 is modified to Phosphothreonine. K11 bears the N6-succinyllysine mark. K16 is modified (N6-acetyllysine; alternate). K16 is subject to N6-succinyllysine; alternate. Y24 carries the post-translational modification Phosphotyrosine. N6-succinyllysine is present on K40. H58 contributes to the O2 binding site. H87 is a heme b binding site. At S102 the chain carries Phosphoserine. Residue T108 is modified to Phosphothreonine. Phosphoserine occurs at positions 124 and 131. T134 and T137 each carry phosphothreonine. A Phosphoserine modification is found at S138.

This sequence belongs to the globin family. Heterotetramer of two alpha chains and two beta chains. As to expression, red blood cells.

In terms of biological role, involved in oxygen transport from the lung to the various peripheral tissues. Its function is as follows. Hemopressin acts as an antagonist peptide of the cannabinoid receptor CNR1. Hemopressin-binding efficiently blocks cannabinoid receptor CNR1 and subsequent signaling. This Tursiops truncatus (Atlantic bottle-nosed dolphin) protein is Hemoglobin subunit alpha (HBA).